The following is a 400-amino-acid chain: Elongation factor Tu (400 aa).

The tr-type G domain occupies 10–208 (KPHMNVGTIG…AMDSYFPDPV (199 aa)). The interval 19-26 (GHIDHGKT) is G1. Residue 19–26 (GHIDHGKT) coordinates GTP. A Mg(2+)-binding site is contributed by T26. A G2 region spans residues 60 to 64 (GITIN). The interval 81–84 (DCPG) is G3. GTP is bound by residues 81–85 (DCPGH) and 136–139 (NKVD). The tract at residues 136-139 (NKVD) is G4. Residues 174 to 176 (SAL) are G5.

Belongs to the TRAFAC class translation factor GTPase superfamily. Classic translation factor GTPase family. EF-Tu/EF-1A subfamily. In terms of assembly, monomer.

It localises to the cytoplasm. The catalysed reaction is GTP + H2O = GDP + phosphate + H(+). In terms of biological role, GTP hydrolase that promotes the GTP-dependent binding of aminoacyl-tRNA to the A-site of ribosomes during protein biosynthesis. The sequence is that of Elongation factor Tu from Fervidobacterium nodosum (strain ATCC 35602 / DSM 5306 / Rt17-B1).